The following is a 665-amino-acid chain: MNFCSKNAQMYYIPVGLTSLQKDLIEILLCMHAESFLEEFGPSEAVMQSAAQIKTEKEPEAVEGLGLGPLTPTQMNTMLLRHLRAVANHPCLLVDHYMPRKFLLMEPGEELIAMSEKFRVLNQMMEAILSRRRRQRPLQLVLVSHSVKELDLIEGFMLGKMVKIKRLSGTSLFDEKHQYTERGTAAAESNSTLTSGSTLKDTSPGSVEGKLSSGEAGAGYTTGGIKDDYDYQNSRRHMRAADDGAERQCDHEDWLFLATTTHLTHCTDLFDQYDVDVVLSLDPLLDVSLPALRSVRKQSKSVPLVKLFVQDSAEHFMLTRGISAEHEEDHIYDAVGHFIKNRGVHRQRLGMSAAALAEVVTALLENCEAATDLKSTKPTDTPSELSIVDALSERIMLLKLNHTPYELPLQRGPFSMKSYQLQLKQLIYARLEACQREQECKCAYILDRRMQETANLNRLDEVNAEAGRLFQSLKDEEKLVVDSERRLERTRDEHDRLREKSAHLRRRKAELEELLASSDLDSRVSSKRARLAELRQQLMPLEQQNTAMADSNEELRTRYQTRSSHAATLSSALASLRERKAALTKESTGPATCWMAASATEEHDRLQTELNDLVQQRHFLQKYIDTMKSQYAITNLDELNRTQHNKSGAATSRVRTTRATSPTYI.

The disordered stretch occupies residues 181 to 219 (ERGTAAAESNSTLTSGSTLKDTSPGSVEGKLSSGEAGAG). Residues 187-205 (AESNSTLTSGSTLKDTSPG) are compositionally biased toward polar residues. A coiled-coil region spans residues 457 to 625 (NRLDEVNAEA…QRHFLQKYID (169 aa)). Residues 644 to 665 (HNKSGAATSRVRTTRATSPTYI) are disordered. Low complexity predominate over residues 647 to 665 (SGAATSRVRTTRATSPTYI).

This sequence belongs to the HDA2/3 family. HDA2 subfamily. As to quaternary structure, probable component of some histone deacetylase complex.

It is found in the nucleus. Required for activity of histone deacetylase complexes that are responsible for the deacetylation of lysine residues on the N-terminal part of the core histones (H2A, H2B, H3 and H4). Histone deacetylation gives a tag for epigenetic repression and plays an important role in transcriptional regulation, cell cycle progression and developmental events. This is HDA1 complex subunit 2 (HDA2) from Eremothecium gossypii (strain ATCC 10895 / CBS 109.51 / FGSC 9923 / NRRL Y-1056) (Yeast).